The following is a 573-amino-acid chain: O-fucosyltransferase 20 (573 aa).

Residues 1-60 are Cytoplasmic-facing; the sequence is MALSKNSNSNSFNKKKVSYISVPSQIINSLSSSSLQSLLVSPKKSSRSTNRFSFSYRNPR. The helical; Signal-anchor for type II membrane protein transmembrane segment at 61–81 threads the bilayer; it reads IWFFTLFLVSLFGMLKLGFNV. Residues 82–573 are Lumenal-facing; sequence DPISLPFSRY…RQQQEQQSDA (492 aa). The N-linked (GlcNAc...) asparagine glycan is linked to Asn-138. Residue 344–346 coordinates substrate; sequence HLR. 2 N-linked (GlcNAc...) asparagine glycosylation sites follow: Asn-385 and Asn-517. The segment covering 547–556 has biased composition (basic and acidic residues); it reads AGKDVTKHPV. A disordered region spans residues 547 to 573; that stretch reads AGKDVTKHPVPECMCSDRQQQEQQSDA. The segment covering 563–573 has biased composition (polar residues); that stretch reads DRQQQEQQSDA.

The protein belongs to the glycosyltransferase GT106 family. As to quaternary structure, interacts with RACK1A. Highly expressed in shoot apical meristem (SAM) and in young vegetative tissues.

Its subcellular location is the golgi apparatus membrane. It participates in glycan metabolism. Its function is as follows. May play a role in the biosynthesis of matrix polysaccharides and contribute to the biomechanics and development of the plant cell wall. The polypeptide is O-fucosyltransferase 20 (Arabidopsis thaliana (Mouse-ear cress)).